Consider the following 20-residue polypeptide: D-alpha-glycerophosphatase (20 aa).

Monomer. Requires Mg(2+) as cofactor. The cofactor is Mn(2+).

The protein resides in the cytoplasm. The protein operates within polyol metabolism; glycerol biosynthesis. This Bacillus licheniformis protein is D-alpha-glycerophosphatase.